A 402-amino-acid polypeptide reads, in one-letter code: Formate-dependent phosphoribosylglycinamide formyltransferase (402 aa).

N(1)-(5-phospho-beta-D-ribosyl)glycinamide contacts are provided by residues 23 to 24 and Glu-83; that span reads EL. Residues Arg-116, Lys-157, 162 to 167, 197 to 200, and Glu-205 each bind ATP; these read SSGKGQ and ESQI. One can recognise an ATP-grasp domain in the interval 121–316; sequence RLAAEELGLP…EFELHARAIL (196 aa). Mg(2+) contacts are provided by Glu-275 and Glu-287. N(1)-(5-phospho-beta-D-ribosyl)glycinamide-binding positions include Asp-294, Lys-363, and 370 to 371; that span reads RR.

This sequence belongs to the PurK/PurT family. As to quaternary structure, homodimer.

It catalyses the reaction N(1)-(5-phospho-beta-D-ribosyl)glycinamide + formate + ATP = N(2)-formyl-N(1)-(5-phospho-beta-D-ribosyl)glycinamide + ADP + phosphate + H(+). It functions in the pathway purine metabolism; IMP biosynthesis via de novo pathway; N(2)-formyl-N(1)-(5-phospho-D-ribosyl)glycinamide from N(1)-(5-phospho-D-ribosyl)glycinamide (formate route): step 1/1. Involved in the de novo purine biosynthesis. Catalyzes the transfer of formate to 5-phospho-ribosyl-glycinamide (GAR), producing 5-phospho-ribosyl-N-formylglycinamide (FGAR). Formate is provided by PurU via hydrolysis of 10-formyl-tetrahydrofolate. The protein is Formate-dependent phosphoribosylglycinamide formyltransferase of Acinetobacter baumannii (strain ATCC 17978 / DSM 105126 / CIP 53.77 / LMG 1025 / NCDC KC755 / 5377).